The following is a 946-amino-acid chain: Protein translocase subunit SecA (946 aa).

ATP contacts are provided by residues Gln-87, 105 to 109 (GEGKT), and Asp-524. 2 disordered regions span residues 872–892 (PEQP…NTGE) and 904–946 (PADT…GRYA). The segment covering 907–917 (TVEKSERDPNR) has biased composition (basic and acidic residues). 4 residues coordinate Zn(2+): Cys-930, Cys-932, Cys-941, and His-942. Basic residues predominate over residues 936 to 946 (KKYKHCHGRYA).

Belongs to the SecA family. In terms of assembly, monomer and homodimer. Part of the essential Sec protein translocation apparatus which comprises SecA, SecYEG and auxiliary proteins SecDF-YajC and YidC. The cofactor is Zn(2+).

It localises to the cell inner membrane. The protein resides in the cytoplasm. The catalysed reaction is ATP + H2O + cellular proteinSide 1 = ADP + phosphate + cellular proteinSide 2.. Part of the Sec protein translocase complex. Interacts with the SecYEG preprotein conducting channel. Has a central role in coupling the hydrolysis of ATP to the transfer of proteins into and across the cell membrane, serving both as a receptor for the preprotein-SecB complex and as an ATP-driven molecular motor driving the stepwise translocation of polypeptide chains across the membrane. The polypeptide is Protein translocase subunit SecA (Rhodopseudomonas palustris (strain BisB5)).